Here is a 314-residue protein sequence, read N- to C-terminus: MNPPRLPPAILIMGPTASGKTAVAMALADRFPVELISVDSAQVFIDMDVGTAKPDRATLDRYPHRLIDLITPEESYSAARFRADALTAMAEITAAGKVPVLVGGTMMYYRALLHGLADLPQADAELRAEIDAEAAAEGWPAMHAKLALVDPATAARLHPTDSQRLQRALEICRLTGRPMSELLAESEKQKPPYDLLQIGLLPSDRAVLHQRIARRFDEMLLAGLDEEVRQLRQKYELNLNLPSMRCVGYRQTWEMQEGLIPKREWRDRGVFATRQLAKRQITWLTNSFAAENYDCLDPALVERIAARTEAFLSS.

14–21 (GPTASGKT) contacts ATP. 16–21 (TASGKT) is a substrate binding site. Interaction with substrate tRNA stretches follow at residues 39–42 (DSAQ), 163–167 (QRLQR), and 245–250 (RCVGYR).

It belongs to the IPP transferase family. In terms of assembly, monomer. Mg(2+) is required as a cofactor.

It catalyses the reaction adenosine(37) in tRNA + dimethylallyl diphosphate = N(6)-dimethylallyladenosine(37) in tRNA + diphosphate. Its function is as follows. Catalyzes the transfer of a dimethylallyl group onto the adenine at position 37 in tRNAs that read codons beginning with uridine, leading to the formation of N6-(dimethylallyl)adenosine (i(6)A). In Dechloromonas aromatica (strain RCB), this protein is tRNA dimethylallyltransferase.